A 190-amino-acid chain; its full sequence is Elongation factor P-like protein (190 aa).

This sequence belongs to the elongation factor P family.

The polypeptide is Elongation factor P-like protein (Cronobacter sakazakii (strain ATCC BAA-894) (Enterobacter sakazakii)).